The primary structure comprises 230 residues: Movement and silencing protein TGBp1 (230 aa).

The 114-residue stretch at 1-114 folds into the (+)RNA virus helicase ATP-binding domain; sequence MDSIINALTS…GLALRPHFIK (114 aa). In terms of domain architecture, (+)RNA virus helicase C-terminal spans 115–230; sequence SVSHRLCPAT…VRSPPPHPSH (116 aa).

It belongs to the Tymovirales TGBp1 protein family. In terms of assembly, homodimer and homooligomer. Interacts with capsid protein. Interacts with host AGO1; this interaction targets the host protein for degradation, thereby suppressing the antiviral RNA silencing.

It localises to the host cytoplasm. In terms of biological role, transports viral genome to neighboring plant cells directly through plasmosdesmata, without any budding. The movement protein allows efficient cell to cell propagation, by bypassing the host cell wall barrier. Increases plasmodesma size exclusion limit. Acts as a suppressor of RNA-mediated gene silencing, also known as post-transcriptional gene silencing (PTGS), a mechanism of plant viral defense that limits the accumulation of viral RNAs. This chain is Movement and silencing protein TGBp1, found in Plantago asiatica (P1AMV).